The primary structure comprises 82 residues: UPF0180 protein BT9727_1277 (82 aa).

This sequence belongs to the UPF0180 family.

The polypeptide is UPF0180 protein BT9727_1277 (Bacillus thuringiensis subsp. konkukian (strain 97-27)).